A 283-amino-acid chain; its full sequence is Lactoylglutathione lyase GLX1 (283 aa).

The residue at position 2 (Ala2) is an N-acetylalanine. 2 VOC domains span residues 17–141 (RFLH…LIQR) and 147–275 (PFCQ…LVDN). A Zn(2+)-binding site is contributed by His20. Arg24 serves as a coordination point for substrate. Glu71 serves as a coordination point for Zn(2+). Substrate is bound by residues Asn75 and His89. Positions 89, 137, and 150 each coordinate Zn(2+). Glu137 acts as the Proton donor/acceptor in catalysis. Residues Gln150 and Arg154 each coordinate substrate. Gln150 contributes to the a divalent metal cation binding site. Residue Glu201 participates in Zn(2+) binding. A divalent metal cation is bound at residue Glu201. Asn205 is a binding site for substrate. Gln219 provides a ligand contact to a divalent metal cation. Position 251-252 (251-252 (PL)) interacts with substrate. Val271 is a binding site for a divalent metal cation.

The protein belongs to the glyoxalase I family. Homodimer. The cofactor is Zn(2+). Post-translationally, phosphorylated by SnRK2.8.

The catalysed reaction is (R)-S-lactoylglutathione = methylglyoxal + glutathione. Its pathway is secondary metabolite metabolism; methylglyoxal degradation; (R)-lactate from methylglyoxal: step 1/2. Its function is as follows. Catalyzes the conversion of hemimercaptal, formed from methylglyoxal and glutathione, to S-lactoylglutathione. In Arabidopsis thaliana (Mouse-ear cress), this protein is Lactoylglutathione lyase GLX1.